The primary structure comprises 210 residues: Cell division protein SepF (210 aa).

Disordered regions lie at residues 22-72 and 79-98; these read DYYE…FDDA and RGPR…RGST. 2 stretches are compositionally biased toward basic and acidic residues: residues 37–60 and 79–88; these read RPRE…REYD and RGPREFDRTP.

It belongs to the SepF family. In terms of assembly, homodimer. Interacts with FtsZ.

It is found in the cytoplasm. In terms of biological role, cell division protein that is part of the divisome complex and is recruited early to the Z-ring. Probably stimulates Z-ring formation, perhaps through the cross-linking of FtsZ protofilaments. Its function overlaps with FtsA. The chain is Cell division protein SepF from Mycolicibacterium vanbaalenii (strain DSM 7251 / JCM 13017 / BCRC 16820 / KCTC 9966 / NRRL B-24157 / PYR-1) (Mycobacterium vanbaalenii).